Reading from the N-terminus, the 834-residue chain is MVQRWLYSTNAKDIAVLYFMLAIFSGMAGTAMSLIIRLELAAPGSQYLHGNSQLFNGAPTSAYISLMRTALVLWIINRYLKHMTNSVGANFTGTMACHKTPMISVGGVKCYMVRLTNFLQVFIRITISSYHLDMVKQVWLFYVEVIRLWFIVLDSTGSVKKMKDTNNTKGNTKSEGSTERGNSGVDRGMVVPNTQMKMRFLNQVRYYSVNNNLKMGKDTNIELSKDTSTSDLLEFEKLVMDNMNEENMNNNLLSIMKNVDMLMLAYNRIKSKPGNMTPGTTLETLDGMNMMYLNKLSNELGTGKFKFKPMRMVNIPKPKGGMRPLSVGNPRDKIVQEVMRMILDTIFDKKMSTHSHGFRKNMSCQTAIWEVRNMFGGSNWFIEVDLKKCFDTISHDLIIKELKRYISDKGFIDLVYKLLRAGYIDEKGTYHKPMLGLPQGSLISPILCNIVMTLVDNWLEDYINLYNKGKVKKQHPTYKKLSRMIAKAKMFSTRLKLHKERAKGPTFIYNDPNFKRMKYVRYADDILIGVLGSKNDCKMIKRDLNNFLNSLGLTMNEEKTLITCATETPARFLGYNISITPLKRMPTVTKTIRGKTIRSRNTTRPIINAPIRDIINKLATNGYCKHNKNGRMGVPTRVGRWTYEEPRTIINNYKALGRGILNYYKLATNYKRLRERIYYVLYYSCVLTLASKYRLKTMSKTIKKFGYNLNIIENDKLIANFPRNTFDNIKKIENHGMFMYMSEAKVTDPFEYIDSIKYMLPTAKANFNKPCSICNSTIDVEMHHVKQLHRGMLKATKDYITGRMITMNRKQIPLCKQCHIKTHKNKFKNMGPGM.

Positions 162-188 (MKDTNNTKGNTKSEGSTERGNSGVDRG) are disordered. Polar residues predominate over residues 167–181 (NTKGNTKSEGSTERG). The Reverse transcriptase domain maps to 296–577 (LSNELGTGKF…TPARFLGYNI (282 aa)).

It is found in the mitochondrion. The polypeptide is Putative COX1/OXI3 intron 1 protein (AI1) (Saccharomyces cerevisiae (strain ATCC 204508 / S288c) (Baker's yeast)).